Reading from the N-terminus, the 247-residue chain is 14-3-3 protein gamma (247 aa).

This sequence belongs to the 14-3-3 family. As to quaternary structure, homodimer, and heterodimer with other family members.

The protein localises to the cytoplasm. Adapter protein implicated in the regulation of a large spectrum of both general and specialized signaling pathways. Binds to a large number of partners, usually by recognition of a phosphoserine or phosphothreonine motif. Binding generally results in the modulation of the activity of the binding partner. The polypeptide is 14-3-3 protein gamma (YWHAG) (Gallus gallus (Chicken)).